Here is a 393-residue protein sequence, read N- to C-terminus: Phosphoglycerate kinase (393 aa).

Substrate is bound by residues 21 to 23 (DLN), Arg-36, 59 to 62 (HLGR), Arg-113, and Arg-146. Residues Lys-197, Glu-319, and 345-348 (GGDT) contribute to the ATP site.

Belongs to the phosphoglycerate kinase family. Monomer.

Its subcellular location is the cytoplasm. The enzyme catalyses (2R)-3-phosphoglycerate + ATP = (2R)-3-phospho-glyceroyl phosphate + ADP. The protein operates within carbohydrate degradation; glycolysis; pyruvate from D-glyceraldehyde 3-phosphate: step 2/5. This is Phosphoglycerate kinase from Nitratidesulfovibrio vulgaris (strain DP4) (Desulfovibrio vulgaris).